The chain runs to 386 residues: Succinate--CoA ligase [ADP-forming] subunit beta (386 aa).

Residues 9–244 enclose the ATP-grasp domain; sequence KEILRSYGVS…LDEEDPKEVE (236 aa). ATP contacts are provided by residues K46, 53–55, E99, C102, and E107; that span reads GRG. Residues N199 and D213 each coordinate Mg(2+). Residues N264 and 321–323 contribute to the substrate site; that span reads GIM.

This sequence belongs to the succinate/malate CoA ligase beta subunit family. As to quaternary structure, heterotetramer of two alpha and two beta subunits. Mg(2+) serves as cofactor.

The catalysed reaction is succinate + ATP + CoA = succinyl-CoA + ADP + phosphate. It carries out the reaction GTP + succinate + CoA = succinyl-CoA + GDP + phosphate. It participates in carbohydrate metabolism; tricarboxylic acid cycle; succinate from succinyl-CoA (ligase route): step 1/1. Its function is as follows. Succinyl-CoA synthetase functions in the citric acid cycle (TCA), coupling the hydrolysis of succinyl-CoA to the synthesis of either ATP or GTP and thus represents the only step of substrate-level phosphorylation in the TCA. The beta subunit provides nucleotide specificity of the enzyme and binds the substrate succinate, while the binding sites for coenzyme A and phosphate are found in the alpha subunit. This Geobacillus thermodenitrificans (strain NG80-2) protein is Succinate--CoA ligase [ADP-forming] subunit beta.